The primary structure comprises 788 residues: Pyridoxal-dependent decarboxylase domain-containing protein 1 (788 aa).

The span at 28–40 (EDSQRRTEEENGK) shows a compositional bias: basic and acidic residues. A disordered region spans residues 28 to 51 (EDSQRRTEEENGKKLISGDIPGPL). Threonine 414 carries the post-translational modification Phosphothreonine. Residue serine 652 is modified to Phosphoserine. The tract at residues 684–788 (AGVTLPPTPS…SQVEGPESLR (105 aa)) is disordered. Phosphothreonine is present on residues threonine 687 and threonine 691. Serine 710, serine 718, and serine 722 each carry phosphoserine. Positions 725-734 (HIEDLEKVER) are enriched in basic and acidic residues. Over residues 738 to 750 (GPEQITLEASSTE) the composition is skewed to polar residues. Residues serine 748, serine 757, serine 779, and serine 786 each carry the phosphoserine modification. The segment covering 772–788 (PHPEDDHSQVEGPESLR) has biased composition (basic and acidic residues).

The protein belongs to the group II decarboxylase family. It depends on pyridoxal 5'-phosphate as a cofactor.

The protein is Pyridoxal-dependent decarboxylase domain-containing protein 1 (PDXDC1) of Homo sapiens (Human).